Here is a 708-residue protein sequence, read N- to C-terminus: Leukotoxin translocation ATP-binding protein LktB (708 aa).

Positions Met1 to Val126 constitute a Peptidase C39 domain. Residues Phe155 to Gln437 form the ABC transmembrane type-1 domain. Helical transmembrane passes span Leu159–Val179, Leu192–Leu212, Ala270–Tyr290, Leu296–Leu316, and Val389–Gly409. An ABC transporter domain is found at Ile469–Gln704. Gly503–Ser510 lines the ATP pocket.

It belongs to the ABC transporter superfamily. Protein-1 exporter (TC 3.A.1.109) family. Homodimer.

The protein localises to the cell inner membrane. It carries out the reaction ATP + H2O + proteinSide 1 = ADP + phosphate + proteinSide 2.. Part of the ABC transporter complex LktBD involved in leukotoxin export. Transmembrane domains (TMD) form a pore in the inner membrane and the ATP-binding domain (NBD) is responsible for energy generation. This chain is Leukotoxin translocation ATP-binding protein LktB (lktB), found in Mannheimia haemolytica (Pasteurella haemolytica).